A 211-amino-acid chain; its full sequence is Uracil phosphoribosyltransferase (211 aa).

5-phospho-alpha-D-ribose 1-diphosphate-binding positions include Arg78, Arg103, and 130 to 138; that span reads DPMLATGGT. Uracil-binding positions include Ile195 and 200 to 202; that span reads GDA. Asp201 contacts 5-phospho-alpha-D-ribose 1-diphosphate.

Belongs to the UPRTase family. Requires Mg(2+) as cofactor.

The catalysed reaction is UMP + diphosphate = 5-phospho-alpha-D-ribose 1-diphosphate + uracil. Its pathway is pyrimidine metabolism; UMP biosynthesis via salvage pathway; UMP from uracil: step 1/1. With respect to regulation, allosterically activated by GTP. Catalyzes the conversion of uracil and 5-phospho-alpha-D-ribose 1-diphosphate (PRPP) to UMP and diphosphate. The polypeptide is Uracil phosphoribosyltransferase (Arthrobacter sp. (strain FB24)).